A 183-amino-acid polypeptide reads, in one-letter code: Peptidyl-tRNA hydrolase (183 aa).

Tyr-14 serves as a coordination point for tRNA. His-19 functions as the Proton acceptor in the catalytic mechanism. TRNA-binding residues include Tyr-55 and Asn-57.

It belongs to the PTH family. As to quaternary structure, monomer.

The protein resides in the cytoplasm. It carries out the reaction an N-acyl-L-alpha-aminoacyl-tRNA + H2O = an N-acyl-L-amino acid + a tRNA + H(+). In terms of biological role, hydrolyzes ribosome-free peptidyl-tRNAs (with 1 or more amino acids incorporated), which drop off the ribosome during protein synthesis, or as a result of ribosome stalling. Its function is as follows. Catalyzes the release of premature peptidyl moieties from peptidyl-tRNA molecules trapped in stalled 50S ribosomal subunits, and thus maintains levels of free tRNAs and 50S ribosomes. The protein is Peptidyl-tRNA hydrolase of Thermus thermophilus (strain ATCC BAA-163 / DSM 7039 / HB27).